The primary structure comprises 144 residues: MELNNLKPAEGSKHAKRRVGRGIGSGLGKTAGRGHKGQKSRSGGFHKVGFEGGQMPLQRRLPKRGFTSLTKEFVGEVRLSDLEKLPVDEIDLLALKQAGLIGEMITSAKIIKTGELKRKVVVKGLGATKGARAAIEAAGGSFAE.

Positions 1 to 57 are disordered; that stretch reads MELNNLKPAEGSKHAKRRVGRGIGSGLGKTAGRGHKGQKSRSGGFHKVGFEGGQMPL. Residues 21–31 are compositionally biased toward gly residues; the sequence is RGIGSGLGKTA.

It belongs to the universal ribosomal protein uL15 family. As to quaternary structure, part of the 50S ribosomal subunit.

Binds to the 23S rRNA. The sequence is that of Large ribosomal subunit protein uL15 from Paraburkholderia phytofirmans (strain DSM 17436 / LMG 22146 / PsJN) (Burkholderia phytofirmans).